Here is a 642-residue protein sequence, read N- to C-terminus: Threonine--tRNA ligase (642 aa).

One can recognise a TGS domain in the interval M1 to T61. Residues D244–P535 are catalytic. The Zn(2+) site is built by C335, H386, and H512.

Belongs to the class-II aminoacyl-tRNA synthetase family. Homodimer. The cofactor is Zn(2+).

It is found in the cytoplasm. It carries out the reaction tRNA(Thr) + L-threonine + ATP = L-threonyl-tRNA(Thr) + AMP + diphosphate + H(+). Functionally, catalyzes the attachment of threonine to tRNA(Thr) in a two-step reaction: L-threonine is first activated by ATP to form Thr-AMP and then transferred to the acceptor end of tRNA(Thr). Also edits incorrectly charged L-seryl-tRNA(Thr). In Vibrio cholerae serotype O1 (strain M66-2), this protein is Threonine--tRNA ligase.